The primary structure comprises 163 residues: MAVLDILTIPDERLKRKAQPVKDIEAIQGFIDDLIETMYHTDDGIGLASTQVGSTDAVIVIDLSETRDQPLVLVNPEIVEKSGEYVGEEGCLSIPGYRAKVTRFEKVKVTALDRQGKAIEIETDDFLAIVLQHEIDHLHGKVFIEHLSTLKQQIALKKVRKYA.

Fe cation contacts are provided by C91 and H133. E134 is a catalytic residue. H137 serves as a coordination point for Fe cation.

The protein belongs to the polypeptide deformylase family. Fe(2+) is required as a cofactor.

It carries out the reaction N-terminal N-formyl-L-methionyl-[peptide] + H2O = N-terminal L-methionyl-[peptide] + formate. Removes the formyl group from the N-terminal Met of newly synthesized proteins. Requires at least a dipeptide for an efficient rate of reaction. N-terminal L-methionine is a prerequisite for activity but the enzyme has broad specificity at other positions. In Shewanella oneidensis (strain ATCC 700550 / JCM 31522 / CIP 106686 / LMG 19005 / NCIMB 14063 / MR-1), this protein is Peptide deformylase 3.